The sequence spans 287 residues: Energy-coupling factor transporter ATP-binding protein EcfA1 (287 aa).

An ABC transporter domain is found at 6 to 248 (IVAEGVSYAY…ADRIRALRLD (243 aa)). 47–54 (GMNGSGKS) is an ATP binding site.

It belongs to the ABC transporter superfamily. Energy-coupling factor EcfA family. As to quaternary structure, forms a stable energy-coupling factor (ECF) transporter complex composed of 2 membrane-embedded substrate-binding proteins (S component), 2 ATP-binding proteins (A component) and 2 transmembrane proteins (T component).

It is found in the cell membrane. Functionally, ATP-binding (A) component of a common energy-coupling factor (ECF) ABC-transporter complex. Unlike classic ABC transporters this ECF transporter provides the energy necessary to transport a number of different substrates. This Symbiobacterium thermophilum (strain DSM 24528 / JCM 14929 / IAM 14863 / T) protein is Energy-coupling factor transporter ATP-binding protein EcfA1.